Consider the following 274-residue polypeptide: Acyl-[acyl-carrier-protein]--UDP-N-acetylglucosamine O-acyltransferase (274 aa).

The protein belongs to the transferase hexapeptide repeat family. LpxA subfamily. In terms of assembly, homotrimer.

Its subcellular location is the cytoplasm. It catalyses the reaction a (3R)-hydroxyacyl-[ACP] + UDP-N-acetyl-alpha-D-glucosamine = a UDP-3-O-[(3R)-3-hydroxyacyl]-N-acetyl-alpha-D-glucosamine + holo-[ACP]. Its pathway is glycolipid biosynthesis; lipid IV(A) biosynthesis; lipid IV(A) from (3R)-3-hydroxytetradecanoyl-[acyl-carrier-protein] and UDP-N-acetyl-alpha-D-glucosamine: step 1/6. Its function is as follows. Involved in the biosynthesis of lipid A, a phosphorylated glycolipid that anchors the lipopolysaccharide to the outer membrane of the cell. This chain is Acyl-[acyl-carrier-protein]--UDP-N-acetylglucosamine O-acyltransferase, found in Bartonella henselae (strain ATCC 49882 / DSM 28221 / CCUG 30454 / Houston 1) (Rochalimaea henselae).